The chain runs to 784 residues: Probable aminopeptidase 1 (784 aa).

Substrate is bound by residues E103 and 236-240 (GAMEN). H271 provides a ligand contact to Zn(2+). Catalysis depends on E272, which acts as the Proton acceptor. Zn(2+) is bound by residues H275 and E294.

It belongs to the peptidase M1 family. Zn(2+) serves as cofactor.

The protein localises to the cytoplasm. The chain is Probable aminopeptidase 1 (ape1) from Saccharolobus solfataricus (strain ATCC 35092 / DSM 1617 / JCM 11322 / P2) (Sulfolobus solfataricus).